We begin with the raw amino-acid sequence, 398 residues long: MSKEKVILAYSGGLDTSVAITWLKKDYDVVAVCMDVGEGKDLDFIHDKALKVGAVESYVIDVKDEFATDYVLVAHQSHAYYEQKYPLVSALSRPLISKKLVEIAHQIGATTIAHGCTGKGNDQVRFEVSIAALDLNLKVIAPVREWKWSREEEIYYAKENGVPVPADLDNPYSVDQNLWGRANECGILENPWNQAPEEAFGITTSPEQAPDMPEYIEIEFSEGVPVSLNGEVLKLADLIQKLNEIAGKHGVGRIDHVENRLVGIKSREIYECPGAVTLLTAHKEIEDLTLVREVAHFKPIIENELSNLIYNALWFSSATQALIAYIKETQKVVNGTAKVKLYKGSAQVVARKSPSSLYDENLATYTSADTFDQDAAVGFIKLWGLPTKVHSEVQKSAK.

9 to 17 (AYSGGLDTS) serves as a coordination point for ATP. Tyr85 serves as a coordination point for L-citrulline. Gly115 contributes to the ATP binding site. L-aspartate-binding residues include Thr117, Asn121, and Asp122. Position 121 (Asn121) interacts with L-citrulline. Positions 125, 173, 258, and 270 each coordinate L-citrulline.

It belongs to the argininosuccinate synthase family. Type 1 subfamily. As to quaternary structure, homotetramer.

Its subcellular location is the cytoplasm. It catalyses the reaction L-citrulline + L-aspartate + ATP = 2-(N(omega)-L-arginino)succinate + AMP + diphosphate + H(+). Its pathway is amino-acid biosynthesis; L-arginine biosynthesis; L-arginine from L-ornithine and carbamoyl phosphate: step 2/3. The sequence is that of Argininosuccinate synthase from Streptococcus pneumoniae (strain ATCC BAA-255 / R6).